We begin with the raw amino-acid sequence, 145 residues long: 3-dehydroquinate dehydratase (145 aa).

Tyr-24 (proton acceptor) is an active-site residue. Substrate is bound by residues Asn-75, His-81, and Asp-88. The Proton donor role is filled by His-101. Residues 102–103 (LS) and Arg-112 each bind substrate.

The protein belongs to the type-II 3-dehydroquinase family. As to quaternary structure, homododecamer.

The catalysed reaction is 3-dehydroquinate = 3-dehydroshikimate + H2O. It functions in the pathway metabolic intermediate biosynthesis; chorismate biosynthesis; chorismate from D-erythrose 4-phosphate and phosphoenolpyruvate: step 3/7. Functionally, catalyzes a trans-dehydration via an enolate intermediate. The chain is 3-dehydroquinate dehydratase from Phenylobacterium zucineum (strain HLK1).